Reading from the N-terminus, the 407-residue chain is Transmembrane protein 184B (407 aa).

The span at 1–28 shows a compositional bias: low complexity; the sequence is MTVRGAALAPDPASPTTTTASPSVSATP. Residues 1–31 form a disordered region; sequence MTVRGAALAPDPASPTTTTASPSVSATPEGS. 7 helical membrane-spanning segments follow: residues 40-60, 84-104, 121-141, 178-198, 214-234, 249-269, and 290-310; these read FLMTTAAQAISGFFVWTALLI, ILFIVPIYAFDSWLSLLFFTN, FVIYNFLSLCYEYLGGESAIM, LQFCVVKPLMAVSTVILQAFG, VTIIYNISVSLALYALFLFYF, FFMVKSVIFLSFWQGMLLAIL, and VAAGYQDFIICVEMFFAALAL. The tract at residues 369 to 395 is disordered; that stretch reads TLEPGPTWRGGTHSLSRSHSLSGARDN. Ser-388, Ser-402, and Ser-403 each carry phosphoserine.

This sequence belongs to the TMEM184 family.

It is found in the membrane. In terms of biological role, may activate the MAP kinase signaling pathway. This is Transmembrane protein 184B (Tmem184b) from Mus musculus (Mouse).